The sequence spans 431 residues: GDP-L-galactose phosphorylase 2 (431 aa).

The active-site Tele-GMP-histidine intermediate is His-235. Residues 398 to 407 (EEEEEEELEE) are compositionally biased toward acidic residues. The tract at residues 398–417 (EEEEEEELEEQNSMNGGSFT) is disordered.

Belongs to the GDPGP1 family. Interacts with TLP1. Expressed in leaves, stems, roots, flowers and siliques.

Its subcellular location is the cytoplasm. It localises to the nucleus. The catalysed reaction is GDP-beta-L-galactose + phosphate = beta-L-galactose 1-phosphate + GDP + H(+). It functions in the pathway cofactor biosynthesis; L-ascorbate biosynthesis via GDP-alpha-D-mannose pathway; L-ascorbate from GDP-alpha-D-mannose: step 2/5. In terms of biological role, catalyzes a reaction of the Smirnoff-Wheeler pathway, the major route to ascorbate biosynthesis in plants. Acts as a phosphorylase rather than as a transferase. Uses preferentially GDP-L-galactose and GDP-D-glucose as substrates. Lower activity with GDP-L-fucose, very low activity with GDP-D-mannose, and no activity with UDP-D-glucose, UDP-D-galactose or ADP-D-glucose. Highly specific for inorganic phosphate as the guanylyl acceptor. This Arabidopsis thaliana (Mouse-ear cress) protein is GDP-L-galactose phosphorylase 2 (VTC5).